The sequence spans 316 residues: Adenine deaminase (316 aa).

Positions 14, 16, and 194 each coordinate Zn(2+). Catalysis depends on E197, which acts as the Proton donor. Residue D275 coordinates Zn(2+). Substrate is bound at residue D276.

Belongs to the metallo-dependent hydrolases superfamily. Adenosine and AMP deaminases family. Adenine deaminase type 2 subfamily. The cofactor is Zn(2+).

The enzyme catalyses adenine + H2O + H(+) = hypoxanthine + NH4(+). Functionally, catalyzes the hydrolytic deamination of adenine to hypoxanthine. Plays an important role in the purine salvage pathway and in nitrogen catabolism. The chain is Adenine deaminase from Pseudomonas aeruginosa (strain UCBPP-PA14).